Reading from the N-terminus, the 256-residue chain is Thiazole synthase (256 aa).

Catalysis depends on K98, which acts as the Schiff-base intermediate with DXP. Residues G159, 185-186 (AG), and 207-208 (NT) contribute to the 1-deoxy-D-xylulose 5-phosphate site.

This sequence belongs to the ThiG family. Homotetramer. Forms heterodimers with either ThiH or ThiS.

The protein localises to the cytoplasm. It carries out the reaction [ThiS sulfur-carrier protein]-C-terminal-Gly-aminoethanethioate + 2-iminoacetate + 1-deoxy-D-xylulose 5-phosphate = [ThiS sulfur-carrier protein]-C-terminal Gly-Gly + 2-[(2R,5Z)-2-carboxy-4-methylthiazol-5(2H)-ylidene]ethyl phosphate + 2 H2O + H(+). It participates in cofactor biosynthesis; thiamine diphosphate biosynthesis. Catalyzes the rearrangement of 1-deoxy-D-xylulose 5-phosphate (DXP) to produce the thiazole phosphate moiety of thiamine. Sulfur is provided by the thiocarboxylate moiety of the carrier protein ThiS. In vitro, sulfur can be provided by H(2)S. This Aliivibrio salmonicida (strain LFI1238) (Vibrio salmonicida (strain LFI1238)) protein is Thiazole synthase.